Here is a 224-residue protein sequence, read N- to C-terminus: MTEKRAVILLSGGLDSATVVAMAKAEGYSCYTMSFDYGQRHRAELNAAARVARDLGVVEHKVIGLNLDGIGGSALTDSSIDVPETPGEGIPVTYVPARNTVFLSLALGWAEVLQARDIFIGVNAVDYSGYPDCRPEFVEAFERMANLATKAGVEGQGFRIQAPLQNMSKAQIVQAGMARGVDYSLTVSCYQADDEGRACGKCDSCRLRADGFKAAGVEDPTRYF.

Position 10 to 20 (10 to 20 (LSGGLDSATVV)) interacts with ATP. Residues Cys-189, Cys-199, Cys-202, and Cys-205 each coordinate Zn(2+).

The protein belongs to the QueC family. Requires Zn(2+) as cofactor.

The catalysed reaction is 7-carboxy-7-deazaguanine + NH4(+) + ATP = 7-cyano-7-deazaguanine + ADP + phosphate + H2O + H(+). Its pathway is purine metabolism; 7-cyano-7-deazaguanine biosynthesis. Its function is as follows. Catalyzes the ATP-dependent conversion of 7-carboxy-7-deazaguanine (CDG) to 7-cyano-7-deazaguanine (preQ(0)). The chain is 7-cyano-7-deazaguanine synthase from Pseudomonas putida (strain W619).